We begin with the raw amino-acid sequence, 156 residues long: Egg-lysin (156 aa).

Positions 1-18 (MKLLVLCVFAMMATLAVS) are cleaved as a signal peptide.

Monomer. Homodimer. Molecules associate into dimers and then rapidly dissociate again. Interacts (as a monomer) with the egg vitelline layer protein VERL (via VERL repeats); each VERL chain can bind multiple copies of lysin. In terms of tissue distribution, sperm.

It is found in the cytoplasmic vesicle. It localises to the secretory vesicle. The protein resides in the acrosome lumen. Functionally, creates a 3 um hole in the egg vitelline layer through which the sperm passes. Does not have enzyme activity. Species-specific interaction between the sperm protein lysin and the egg protein VERL exposes a basic surface on lysin that may dissociate the egg vitelline layer via electrostatic repulsion. Plays a role in ensuring species-specific fertilization. The polypeptide is Egg-lysin (Haliotis cracherodii (Black abalone)).